The sequence spans 196 residues: Transmembrane protein 126A (196 aa).

Over 1–34 the chain is Mitochondrial matrix; the sequence is MESHKPSTNKDDLIFNIIPRKIKQLPESDRNLLE. Residues 35–55 form a helical membrane-spanning segment; that stretch reads YGSAYIGLNAAFGGLIANSLF. Over 56–57 the chain is Mitochondrial intermembrane; that stretch reads RR. Residues 58 to 78 form a helical membrane-spanning segment; sequence ILNVTQARVASSLPMAVIPFL. Over 79-106 the chain is Mitochondrial matrix; sequence TANLSYHSFVSLPLSTGNLNCEICTTTR. A helical membrane pass occupies residues 107–127; that stretch reads GTLVGFVLGGLYPILLAIPVN. Residues 128–159 lie on the Mitochondrial intermembrane side of the membrane; that stretch reads GGLAARYESSPLPQRGNIFNYWITISKPVFRK. The chain crosses the membrane as a helical span at residues 160-176; it reads MLFPTLLQTAFAAYLGS. Topologically, residues 177 to 196 are mitochondrial matrix; it reads RQYKLLIKALQLPEPDLEIQ.

The protein belongs to the TMEM126 family. In terms of assembly, interacts with OXA1L; promoting cotranslational quality control in mitochondria.

It localises to the mitochondrion inner membrane. Protein required for the cotranslational protein quality control in the inner membrane of the mitochondria. Associates with newly synthesized polypeptides and may act as a chaperone that cooperates with OXA1L for the insertion of newly synthesized mitochondrial proteins into the inner membrane. Required for the assembly of the ND4 module of mitochondrial complex I. The protein is Transmembrane protein 126A (Tmem126a) of Rattus norvegicus (Rat).